The chain runs to 970 residues: Toxin subunit YenC2 (970 aa).

RHS repeat units follow at residues 168-182, 297-311, 329-343, 361-375, 408-422, 500-514, 580-594, 606-620, and 640-654; these read AGQCVSYYDAAGLIQ, GVVTTYTYEAETQRL, LQDLRYEYDPVGNVL, VPENAYRYDSLYQLV, NYTRTYTYDSAGNLM, DDSESYRYDGSSQRI, NDQIRWSYDNLTCSS, SMEEYYPYGGTAVWA, and DATGLYYYGFRYYQP. Residues 610-690 form an RHS-repeat associated core domain region; that stretch reads YYPYGGTAVW…PLRLTDPDGM (81 aa). The segment at 849–950 is deaminase domain; sequence TEAFITGIRS…YNCSGIISGL (102 aa).

The protein belongs to the RHS family. In terms of assembly, semipurified toxin complex consists of at least YenA1-YenA2-YenB-YenC1-YenC2-Chi1-Chi2. YenB and the N-terminus of YenC2 form a large hollow shell of beta-strands. The shell is closed at both ends, within which the C-terminus of YenC2 is probably found. The C-terminal region dissociates from the YenB-YenC2 complex at pH 4.5 but not 7.5. The Yen-TC:K9 subcomplex is about 26 nm tall and 22 nm in diameter with 5-fold symmetry and 5 copies of YenA1, YenA2, Chi1 and Chi2; the chitinase subunits may be solvent accessible on the exterior the complex. The Yen-TC:K9 subcomplex has no insecticidal activity. The native complex with additional YenB, YenC1 and YenC2 subunits is 16 nm taller and is insecticidal; the toxicity-conferring subunits are present at about 1 copy each.

Its subcellular location is the secreted. Its activity is regulated as follows. Toxin complex is secreted when grown at 25 degrees Celsius or less; at higher temperatures the proteins are present intracellularly but not secreted. Its function is as follows. Part of an orally active toxin complex (TC) with strong insecticidal effects on larvae of the Coleoptera Costelytra zealandica, Acrossidius tasmania and Adoryphorus couloni and some Lepidoptera larvae. The TC has an endochitinase activity. The chain is Toxin subunit YenC2 from Yersinia entomophaga.